A 218-amino-acid polypeptide reads, in one-letter code: uncharacterized protein (218 aa).

The transit peptide at 1-28 (MLSLQCLPPFFISVPNRSTNSCSTAPLR) directs the protein to the chloroplast.

The protein belongs to the SixA phosphatase family.

Its subcellular location is the plastid. The protein localises to the chloroplast. This is an uncharacterized protein from Arabidopsis thaliana (Mouse-ear cress).